A 240-amino-acid polypeptide reads, in one-letter code: 1-(5-phosphoribosyl)-5-[(5-phosphoribosylamino)methylideneamino] imidazole-4-carboxamide isomerase (240 aa).

Asp8 acts as the Proton acceptor in catalysis. Catalysis depends on Asp130, which acts as the Proton donor.

It belongs to the HisA/HisF family.

The protein localises to the cytoplasm. It catalyses the reaction 1-(5-phospho-beta-D-ribosyl)-5-[(5-phospho-beta-D-ribosylamino)methylideneamino]imidazole-4-carboxamide = 5-[(5-phospho-1-deoxy-D-ribulos-1-ylimino)methylamino]-1-(5-phospho-beta-D-ribosyl)imidazole-4-carboxamide. Its pathway is amino-acid biosynthesis; L-histidine biosynthesis; L-histidine from 5-phospho-alpha-D-ribose 1-diphosphate: step 4/9. This chain is 1-(5-phosphoribosyl)-5-[(5-phosphoribosylamino)methylideneamino] imidazole-4-carboxamide isomerase, found in Flavobacterium johnsoniae (strain ATCC 17061 / DSM 2064 / JCM 8514 / BCRC 14874 / CCUG 350202 / NBRC 14942 / NCIMB 11054 / UW101) (Cytophaga johnsonae).